Reading from the N-terminus, the 241-residue chain is Methylthioribulose-1-phosphate dehydratase (241 aa).

Residues 1-11 (MSSLCDTSNGE) show a composition bias toward polar residues. A disordered region spans residues 1–20 (MSSLCDTSNGESHADPCQDK). Cys-96 provides a ligand contact to substrate. The Zn(2+) site is built by His-114 and His-116. The active-site Proton donor/acceptor is Glu-138. His-194 serves as a coordination point for Zn(2+).

This sequence belongs to the aldolase class II family. MtnB subfamily. The cofactor is Zn(2+).

It is found in the cytoplasm. It catalyses the reaction 5-(methylsulfanyl)-D-ribulose 1-phosphate = 5-methylsulfanyl-2,3-dioxopentyl phosphate + H2O. It participates in amino-acid biosynthesis; L-methionine biosynthesis via salvage pathway; L-methionine from S-methyl-5-thio-alpha-D-ribose 1-phosphate: step 2/6. Functionally, catalyzes the dehydration of methylthioribulose-1-phosphate (MTRu-1-P) into 2,3-diketo-5-methylthiopentyl-1-phosphate (DK-MTP-1-P). Functions in the methionine salvage pathway. May play a role in apoptosis. This is Methylthioribulose-1-phosphate dehydratase from Osmerus mordax (Rainbow smelt).